A 338-amino-acid polypeptide reads, in one-letter code: Glyceraldehyde-3-phosphate dehydrogenase (338 aa).

Residues 12–13 (RI), Asp-34, and Arg-80 each bind NAD(+). Residues 151-153 (SCT), Thr-182, 211-212 (TG), and Arg-234 contribute to the D-glyceraldehyde 3-phosphate site. Cys-152 serves as the catalytic Nucleophile. Residue Asn-316 coordinates NAD(+).

It belongs to the glyceraldehyde-3-phosphate dehydrogenase family. In terms of assembly, homotetramer.

The protein localises to the cytoplasm. The enzyme catalyses D-glyceraldehyde 3-phosphate + phosphate + NAD(+) = (2R)-3-phospho-glyceroyl phosphate + NADH + H(+). Its pathway is carbohydrate degradation; glycolysis; pyruvate from D-glyceraldehyde 3-phosphate: step 1/5. The protein is Glyceraldehyde-3-phosphate dehydrogenase (GPD) of Paracoccidioides lutzii (strain ATCC MYA-826 / Pb01) (Paracoccidioides brasiliensis).